An 830-amino-acid polypeptide reads, in one-letter code: ABC transporter G family member STR (830 aa).

Over 1–551 the chain is Cytoplasmic; that stretch reads MAKFKRTDTN…RTTLNVIRTP (551 aa). One can recognise an ABC transporter domain in the interval 46 to 297; it reads LEFNNLSYSV…LAGFARPVPD (252 aa). 90-97 contacts ATP; that stretch reads GPSGAGKS. 3 disordered regions span residues 333 to 356, 368 to 422, and 471 to 491; these read DQAA…PYAK, SHFS…SMQS, and SMSS…NKTP. The span at 368–378 shows a compositional bias: polar residues; that stretch reads SHFSTGNMNSQ. Acidic residues predominate over residues 395-405; it reads DYEDDDDEDEF. The segment covering 471–483 has biased composition (low complexity); the sequence is SMSSSQFSMTQQT. The helical transmembrane segment at 552–572 threads the bilayer; it reads ELFLSREIVLTVMGLVLSSFF. The Extracellular segment spans residues 573-588; sequence KKLSHFDFKTINHLLN. Residues 589–609 form a helical membrane-spanning segment; that stretch reads FYIFTICLVFFSSNDAVPTFI. Topologically, residues 610–630 are cytoplasmic; that stretch reads QERFIFIRETSHNAYRASSYV. A helical transmembrane segment spans residues 631 to 651; it reads ISSLIVYLPFFAIQGFTFAGI. Topologically, residues 652–661 are extracellular; the sequence is TQYILHLNSS. N-linked (GlcNAc...) asparagine glycosylation occurs at asparagine 659. Residues 662 to 682 form a helical membrane-spanning segment; that stretch reads ILSFWLILYSSLVTSNAYVML. The Cytoplasmic segment spans residues 683 to 690; the sequence is VSALVPSY. The chain crosses the membrane as a helical span at residues 691-711; that stretch reads ITGYAVVIATTALFFLTCGFF. Residues 712–798 lie on the Extracellular side of the membrane; sequence LKRTQIPLVW…LFSMDIREEN (87 aa). N-linked (GlcNAc...) asparagine glycosylation is found at asparagine 771 and asparagine 780. A helical membrane pass occupies residues 799-819; sequence IWLDIVILLAWGVLYRLFFYV. Residues 820–830 lie on the Cytoplasmic side of the membrane; the sequence is VLRFYSKNERK.

The protein belongs to the ABC transporter superfamily. ABCG family. Stunted arbuscule (STR) subfamily. Heterodimerizes with STR2; the resulting transporter is located in the peri-arbuscular membrane.

Its subcellular location is the cell membrane. Its function is as follows. Together with STR2, required for arbuscule development in arbuscular mycorrhizal (AM) symbiosis. This is ABC transporter G family member STR from Petunia hybrida (Petunia).